The following is a 131-amino-acid chain: Small ribosomal subunit protein uS8 (131 aa).

Belongs to the universal ribosomal protein uS8 family. As to quaternary structure, part of the 30S ribosomal subunit. Contacts proteins S5 and S12.

In terms of biological role, one of the primary rRNA binding proteins, it binds directly to 16S rRNA central domain where it helps coordinate assembly of the platform of the 30S subunit. This is Small ribosomal subunit protein uS8 from Porphyromonas gingivalis (strain ATCC 33277 / DSM 20709 / CIP 103683 / JCM 12257 / NCTC 11834 / 2561).